A 471-amino-acid polypeptide reads, in one-letter code: Steroid C26-monooxygenase (471 aa).

A substrate-binding site is contributed by Gly238. Cys412 provides a ligand contact to heme.

This sequence belongs to the cytochrome P450 family. The cofactor is heme.

The enzyme catalyses cholest-4-en-3-one + 6 reduced [2Fe-2S]-[ferredoxin] + 3 O2 + 5 H(+) = (25S)-3-oxocholest-4-en-26-oate + 6 oxidized [2Fe-2S]-[ferredoxin] + 4 H2O. In terms of biological role, involved in the utilization of cholesterol as the sole carbon and energy source by degrading the side chain. Primarily catalyzes the sequential oxidation of the terminal methyl of cholest-4-en-3-one into (25S)-26-hydroxycholest-4-en-3-one (alcohol), (25S)-26-oxocholest-4-en-3-one (aldehyde), to finally yield the carboxylic acid (25S)-3-oxocholest-4-en-26-oate. Also able to sequentially oxidize cholesterol itself, not only cholest-4-en-3-one. In Rhodococcus jostii (strain RHA1), this protein is Steroid C26-monooxygenase (cyp125).